Reading from the N-terminus, the 231-residue chain is Two-component response regulator ARR3 (231 aa).

A Response regulatory domain is found at H34 to T161. 4-aspartylphosphate is present on D94. Positions G170 to A231 are disordered. Residues S185–S199 show a composition bias toward low complexity. Positions L210–V221 are enriched in polar residues.

This sequence belongs to the ARR family. Type-A subfamily. In terms of processing, two-component system major event consists of a His-to-Asp phosphorelay between a sensor histidine kinase (HK) and a response regulator (RR). In plants, the His-to-Asp phosphorelay involves an additional intermediate named Histidine-containing phosphotransfer protein (HPt). This multistep phosphorelay consists of a His-Asp-His-Asp sequential transfer of a phosphate group between first a His and an Asp of the HK protein, followed by the transfer to a conserved His of the HPt protein and finally the transfer to an Asp in the receiver domain of the RR protein. Predominantly expressed in roots.

It is found in the nucleus. Its function is as follows. Functions as a response regulator involved in His-to-Asp phosphorelay signal transduction system. Phosphorylation of the Asp residue in the receiver domain activates the ability of the protein to promote the transcription of target genes. Type-A response regulators seem to act as negative regulators of the cytokinin signaling. The sequence is that of Two-component response regulator ARR3 (ARR3) from Arabidopsis thaliana (Mouse-ear cress).